The sequence spans 226 residues: CRISPR-associated protein Cas5 (226 aa).

Belongs to the CRISPR-associated protein Cas5 family. Subtype I-A/Apern subfamily. Can form a Cascade complex with Csa5, Cas7, Cas3, Cas3' and Cas8a2.

Functionally, CRISPR (clustered regularly interspaced short palindromic repeat) is an adaptive immune system that provides protection against mobile genetic elements (viruses, transposable elements and conjugative plasmids). CRISPR clusters contain spacers, sequences complementary to antecedent mobile elements, and target invading nucleic acids. CRISPR clusters are transcribed and processed into CRISPR RNA (crRNA). This chain is CRISPR-associated protein Cas5 (cas5a), found in Thermoproteus tenax (strain ATCC 35583 / DSM 2078 / JCM 9277 / NBRC 100435 / Kra 1).